Here is a 220-residue protein sequence, read N- to C-terminus: Zip homologous protein 1 (220 aa).

An RING-type zinc finger spans residues 6-44 (CNGCGCSPSKRQFFITACSHVFCETCRTTPTADFCHLCK). Positions 124 to 155 (LTSFEENNRKKLEDIERENEKLRNLISALELK) form a coiled coil. Disordered regions lie at residues 166–186 (EFFM…SDVD) and 201–220 (RSDS…GSLF). Residues 171-180 (GTPTSSNPSV) are compositionally biased toward polar residues.

Interacts with zhp-2; the interaction is required for their chromosome association and stability. As to expression, expressed in the germline.

It is found in the chromosome. Its function is as follows. Recruited co-dependently with zhp-2 to the synaptonemal complex between homologous chromosome pairs to regulate the formation and number of crossover events between homologs during meiotic recombination. Together with zhp-2, promotes the accumulation of pro-crossover proteins, including zhp-3 and zhp-4, at a designated crossover site along the recombination intermediate. Limits the number of crossover sites along a recombination intermediate by restricting the association of these pro-crossover proteins with other recombination sites during late prophase. Also, together with zhp-2, plays a role in chromosome remodeling following crossover formation to promote two successive rounds of chromosome segregation during meiosis. The chain is Zip homologous protein 1 from Caenorhabditis elegans.